A 677-amino-acid chain; its full sequence is DNA ligase (677 aa).

Residues 32–36, 81–82, and Glu-112 each bind NAD(+); these read DSEYD and SL. Catalysis depends on Lys-114, which acts as the N6-AMP-lysine intermediate. 4 residues coordinate NAD(+): Arg-135, Glu-171, Lys-288, and Lys-312. Zn(2+) is bound by residues Cys-416, Cys-419, Cys-434, and Cys-439. Positions 598–677 constitute a BRCT domain; the sequence is YKPLPLSGVE…QEFINMLEQS (80 aa).

The protein belongs to the NAD-dependent DNA ligase family. LigA subfamily. Mg(2+) is required as a cofactor. Requires Mn(2+) as cofactor.

It carries out the reaction NAD(+) + (deoxyribonucleotide)n-3'-hydroxyl + 5'-phospho-(deoxyribonucleotide)m = (deoxyribonucleotide)n+m + AMP + beta-nicotinamide D-nucleotide.. Its function is as follows. DNA ligase that catalyzes the formation of phosphodiester linkages between 5'-phosphoryl and 3'-hydroxyl groups in double-stranded DNA using NAD as a coenzyme and as the energy source for the reaction. It is essential for DNA replication and repair of damaged DNA. The polypeptide is DNA ligase (Dehalococcoides mccartyi (strain ATCC BAA-2266 / KCTC 15142 / 195) (Dehalococcoides ethenogenes (strain 195))).